We begin with the raw amino-acid sequence, 77 residues long: DNA-directed RNA polymerase subunit Rpo5 (77 aa).

The protein belongs to the archaeal Rpo5/eukaryotic RPB5 RNA polymerase subunit family. As to quaternary structure, part of the RNA polymerase complex.

The protein localises to the cytoplasm. It catalyses the reaction RNA(n) + a ribonucleoside 5'-triphosphate = RNA(n+1) + diphosphate. In terms of biological role, DNA-dependent RNA polymerase (RNAP) catalyzes the transcription of DNA into RNA using the four ribonucleoside triphosphates as substrates. This is DNA-directed RNA polymerase subunit Rpo5 from Methanosphaera stadtmanae (strain ATCC 43021 / DSM 3091 / JCM 11832 / MCB-3).